The sequence spans 424 residues: Translation initiation factor 2 subunit gamma (424 aa).

In terms of domain architecture, tr-type G spans 23 to 220 (LPEVNIGLVG…AIEETIPTPE (198 aa)). Positions 32-39 (GHVDHGKT) are G1. Positions 35, 39, 60, and 62 each coordinate Mg(2+). 35 to 40 (DHGKTT) provides a ligand contact to GTP. Positions 60–64 (GISIK) are G2. The G3 stretch occupies residues 107–110 (DSPG). GTP contacts are provided by residues 163 to 166 (NKID) and 198 to 200 (SAQ). Residues 163 to 166 (NKID) are G4. The interval 198–200 (SAQ) is G5.

It belongs to the TRAFAC class translation factor GTPase superfamily. Classic translation factor GTPase family. EIF2G subfamily. As to quaternary structure, heterotrimer composed of an alpha, a beta and a gamma chain. Mg(2+) serves as cofactor.

It catalyses the reaction GTP + H2O = GDP + phosphate + H(+). EIF-2 functions in the early steps of protein synthesis by forming a ternary complex with GTP and initiator tRNA. The polypeptide is Translation initiation factor 2 subunit gamma (Archaeoglobus fulgidus (strain ATCC 49558 / DSM 4304 / JCM 9628 / NBRC 100126 / VC-16)).